Here is a 166-residue protein sequence, read N- to C-terminus: Disulfide bond formation protein B (166 aa).

Topologically, residues 1–11 (MIALPRNRRPL) are cytoplasmic. A helical membrane pass occupies residues 12-28 (FLAVFAYCAALLAFGLY). Over 29–46 (LQHYQGIEPCPMCIMQRY) the chain is Periplasmic. Residues cysteine 38 and cysteine 41 are joined by a disulfide bond. The chain crosses the membrane as a helical span at residues 47-63 (AFALVGVIALVAGLHGP). Residues 64-70 (RGAGVRV) lie on the Cytoplasmic side of the membrane. Residues 71–87 (YGGLLLLTALAGGSVAA) traverse the membrane as a helical segment. Over 88-143 (RQTWMQLYPPEIPECGPGLEYMLESFPLTSALPMIFRGAGDCSAIDWTFLGLSLAN) the chain is Periplasmic. Cysteine 102 and cysteine 129 are oxidised to a cystine. The chain crosses the membrane as a helical span at residues 144–162 (WSLLNFGAAALLALWLLFG). Topologically, residues 163 to 166 (RRVR) are cytoplasmic.

It belongs to the DsbB family.

It localises to the cell inner membrane. Its function is as follows. Required for disulfide bond formation in some periplasmic proteins. Acts by oxidizing the DsbA protein. The sequence is that of Disulfide bond formation protein B from Azoarcus sp. (strain BH72).